Consider the following 282-residue polypeptide: Pyrroline-5-carboxylate reductase (282 aa).

It belongs to the pyrroline-5-carboxylate reductase family.

The enzyme catalyses L-proline + NADP(+) = (S)-1-pyrroline-5-carboxylate + NADPH + 2 H(+). It carries out the reaction L-proline + NAD(+) = (S)-1-pyrroline-5-carboxylate + NADH + 2 H(+). It participates in amino-acid biosynthesis; L-proline biosynthesis; L-proline from L-glutamate 5-semialdehyde: step 1/1. This chain is Pyrroline-5-carboxylate reductase (pro3), found in Schizosaccharomyces pombe (strain 972 / ATCC 24843) (Fission yeast).